A 166-amino-acid chain; its full sequence is Small ribosomal subunit protein uS5 (166 aa).

The 64-residue stretch at 12–75 folds into the S5 DRBM domain; it reads YIEKLVQVNR…EAARRNMIQV (64 aa).

It belongs to the universal ribosomal protein uS5 family. In terms of assembly, part of the 30S ribosomal subunit. Contacts proteins S4 and S8.

With S4 and S12 plays an important role in translational accuracy. Functionally, located at the back of the 30S subunit body where it stabilizes the conformation of the head with respect to the body. This Ectopseudomonas mendocina (strain ymp) (Pseudomonas mendocina) protein is Small ribosomal subunit protein uS5.